The sequence spans 241 residues: Tumor necrosis factor ligand superfamily member 13 (241 aa).

Residues 1–95 (MPASSPGHMG…KDGAKSRRRR (95 aa)) constitute a propeptide that is removed on maturation. A THD domain is found at 107 to 241 (SVLHLVPVNI…HGTFLGFVKL (135 aa)). Asn-115 carries N-linked (GlcNAc...) asparagine glycosylation. Cysteines 187 and 202 form a disulfide.

Belongs to the tumor necrosis factor family. As to quaternary structure, homotrimer. In terms of processing, the soluble form derives from the membrane form by proteolytic processing.

It is found in the secreted. Functionally, cytokine that binds to TNFRSF13B/TACI and to TNFRSF17/BCMA. Plays a role in the regulation of tumor cell growth. May be involved in monocyte/macrophage-mediated immunological processes. This is Tumor necrosis factor ligand superfamily member 13 (Tnfsf13) from Mus musculus (Mouse).